A 254-amino-acid chain; its full sequence is Kallikrein-4 (254 aa).

Positions 1–26 are cleaved as a signal peptide; that stretch reads MATAGNPWGWFLGYLILGVAGSLVSG. Residues 27–30 constitute a propeptide that is removed on maturation; that stretch reads SCSQ. The region spanning 31–252 is the Peptidase S1 domain; the sequence is IINGEDCSPH…FTEWIEKTVQ (222 aa). Disulfide bonds link cysteine 37–cysteine 167, cysteine 56–cysteine 72, cysteine 141–cysteine 241, cysteine 148–cysteine 213, cysteine 178–cysteine 192, and cysteine 203–cysteine 228. Zn(2+) is bound at residue histidine 40. Histidine 71 functions as the Charge relay system in the catalytic mechanism. Residue glutamate 91 participates in Zn(2+) binding. Aspartate 116 functions as the Charge relay system in the catalytic mechanism. An N-linked (GlcNAc...) asparagine glycan is attached at asparagine 169. Serine 207 serves as the catalytic Charge relay system.

This sequence belongs to the peptidase S1 family. Kallikrein subfamily. N-glycosylated. The N-glycan structures are of complex diantennary or triantennary type, which may be further modified with up to 2 sialic acid residues. In terms of tissue distribution, expressed in prostate.

It is found in the secreted. In terms of biological role, has a major role in enamel formation. Required during the maturation stage of tooth development for clearance of enamel proteins and normal structural patterning of the crystalline matrix. This chain is Kallikrein-4 (KLK4), found in Homo sapiens (Human).